The chain runs to 160 residues: Suppressyn (160 aa).

The first 39 residues, 1–39 (MACIYPTTFYTSLPTKSLNMGISLTTILILSVAVLLSTA), serve as a signal peptide directing secretion. Residues 137–160 (AKASKPTTPPENRPRHFHSFIQKL) form a disordered region.

As to quaternary structure, interacts (secreted) with SLC1A5; mainly at cell surface. As to expression, specifically expressed in placenta by extravillous trophoblasts and syncytiotrophoblasts (at protein level).

It localises to the secreted. In terms of biological role, may play a role in trophoblasts syncytialization, the spontaneous fusion of their plasma membranes, an essential process in placental development. May negatively regulate cell-cell fusion by interacting with SLC1A5, the probable receptor on the cell surface of the fusogenic syncytin-1/ERVW-1. The chain is Suppressyn (ERVH48-1) from Homo sapiens (Human).